Consider the following 307-residue polypeptide: Auxiliary protein GraX (307 aa).

As to quaternary structure, homodimer. Interacts with GraR and GraS.

In terms of biological role, plays a role in resistance against cationic antimicrobial peptides (CAMPs). Facilitates the activation of GraS to transduce the signal to GraR. This chain is Auxiliary protein GraX (graX), found in Staphylococcus aureus (strain NCTC 8325 / PS 47).